The primary structure comprises 242 residues: Glucosamine-6-phosphate deaminase (242 aa).

Asp-67 acts as the Proton acceptor; for enolization step in catalysis. The active-site For ring-opening step is Asn-136. The active-site Proton acceptor; for ring-opening step is the His-138. Residue Glu-143 is the For ring-opening step of the active site.

Belongs to the glucosamine/galactosamine-6-phosphate isomerase family. NagB subfamily.

The enzyme catalyses alpha-D-glucosamine 6-phosphate + H2O = beta-D-fructose 6-phosphate + NH4(+). Its pathway is amino-sugar metabolism; N-acetylneuraminate degradation; D-fructose 6-phosphate from N-acetylneuraminate: step 5/5. Functionally, catalyzes the reversible isomerization-deamination of glucosamine 6-phosphate (GlcN6P) to form fructose 6-phosphate (Fru6P) and ammonium ion. In Alkaliphilus metalliredigens (strain QYMF), this protein is Glucosamine-6-phosphate deaminase.